Reading from the N-terminus, the 536-residue chain is Pre-mRNA-splicing factor SLU7-B (536 aa).

Residues 1–42 are disordered; sequence MATASVAFKSREDHRKKLELEEARKAGLAPAEVDEDGKEINP. Residues 9 to 25 are compositionally biased toward basic and acidic residues; the sequence is KSREDHRKKLELEEARK. The CCHC-type zinc-finger motif lies at 96-109; sequence CINCGAMTHSSKAC. 2 disordered regions span residues 176–201 and 488–507; these read LKKL…DLDD and KEDL…YNVN. The span at 187–200 shows a compositional bias: acidic residues; it reads NGDDATSDGEEDLD. The residue at position 193 (serine 193) is a Phosphoserine. The Nuclear localization signal motif lies at 486–493; the sequence is LKKEDLSR. The span at 488–501 shows a compositional bias: basic and acidic residues; sequence KEDLSRREEKDERK.

This sequence belongs to the SLU7 family. As to quaternary structure, interacts with PHYB in photobodies under red light.

It is found in the nucleus. Participates in the second catalytic step of pre-mRNA splicing, when the free hydroxyl group of exon I attacks the 3'-splice site to generate spliced mRNA and the excised lariat intron. Splicing factor acting as a negative regulator of seedling photomorphogenesis by antagonizing PHYB signaling to promote light-induced hypocotyl elongation. Prevents the accumulation of functionally spliced RVE8a form, a circadian clock regulator mediating the transcriptional activation of clock genes containing evening elements (EE), but promotes PIF4 expression to fine-tune hypocotyl elongation in the light. Together with SMP1, involved in the timing of cell cycle arrest during leaf development, in a STRUWWELPETER (SWP) dependent manner; promotes cell proliferation in developing organs. The sequence is that of Pre-mRNA-splicing factor SLU7-B from Arabidopsis thaliana (Mouse-ear cress).